The following is a 218-amino-acid chain: Adenylate kinase (218 aa).

10–15 is an ATP binding site; that stretch reads GAGKGT. The tract at residues 30 to 59 is NMP; it reads STGDMLRAAVKAGTPLGLQAKAVMDAGQLV. Residues T31, R36, 57–59, 85–88, and Q92 each bind AMP; these read QLV and GFPR. Positions 122-159 are LID; the sequence is GRRSHPASGRTYHVKFNPPKVEGKDDVTGEPLVQREDD. Residues R123 and 132-133 contribute to the ATP site; that span reads TY. The disordered stretch occupies residues 127–150; the sequence is PASGRTYHVKFNPPKVEGKDDVTG. R156 and R167 together coordinate AMP. An ATP-binding site is contributed by G203.

The protein belongs to the adenylate kinase family. In terms of assembly, monomer.

Its subcellular location is the cytoplasm. The catalysed reaction is AMP + ATP = 2 ADP. Its pathway is purine metabolism; AMP biosynthesis via salvage pathway; AMP from ADP: step 1/1. Its function is as follows. Catalyzes the reversible transfer of the terminal phosphate group between ATP and AMP. Plays an important role in cellular energy homeostasis and in adenine nucleotide metabolism. The protein is Adenylate kinase of Acidovorax ebreus (strain TPSY) (Diaphorobacter sp. (strain TPSY)).